A 612-amino-acid chain; its full sequence is Threonine--tRNA ligase (612 aa).

The tract at residues 218 to 509 (DHRKLGVELG…LSEHFGGNFP (292 aa)) is catalytic. Residues C310, H361, and H486 each coordinate Zn(2+).

Belongs to the class-II aminoacyl-tRNA synthetase family. In terms of assembly, homodimer. Requires Zn(2+) as cofactor.

The protein resides in the cytoplasm. The enzyme catalyses tRNA(Thr) + L-threonine + ATP = L-threonyl-tRNA(Thr) + AMP + diphosphate + H(+). Its function is as follows. Catalyzes the attachment of threonine to tRNA(Thr) in a two-step reaction: L-threonine is first activated by ATP to form Thr-AMP and then transferred to the acceptor end of tRNA(Thr). Also edits incorrectly charged L-seryl-tRNA(Thr). This Helicobacter pylori (strain G27) protein is Threonine--tRNA ligase.